A 1417-amino-acid chain; its full sequence is DNA-directed RNA polymerase subunit beta' (1417 aa).

Positions 68, 70, 83, and 86 each coordinate Zn(2+). Mg(2+) is bound by residues D458, D460, and D462. Positions 811, 884, 891, and 894 each coordinate Zn(2+).

Belongs to the RNA polymerase beta' chain family. As to quaternary structure, the RNAP catalytic core consists of 2 alpha, 1 beta, 1 beta' and 1 omega subunit. When a sigma factor is associated with the core the holoenzyme is formed, which can initiate transcription. The cofactor is Mg(2+). Zn(2+) serves as cofactor.

The catalysed reaction is RNA(n) + a ribonucleoside 5'-triphosphate = RNA(n+1) + diphosphate. Its function is as follows. DNA-dependent RNA polymerase catalyzes the transcription of DNA into RNA using the four ribonucleoside triphosphates as substrates. The sequence is that of DNA-directed RNA polymerase subunit beta' from Francisella tularensis subsp. holarctica (strain OSU18).